The chain runs to 306 residues: Olfactory receptor 8G17 (306 aa).

Over 1–28 (MEKGNQSTVNKFFLSGLTEQPELQLPLF) the chain is Extracellular. A glycan (N-linked (GlcNAc...) asparagine) is linked at Asn5. The helical transmembrane segment at 29–49 (LLFLGIYLLTVLGNLGMIILI) threads the bilayer. Topologically, residues 50–56 (LLSSYLH) are cytoplasmic. A helical transmembrane segment spans residues 57–77 (TPMYFFLSSLSFIDFCQSTVI). Residues 78 to 97 (TPKMLVKFVREKNEISYPEC) lie on the Extracellular side of the membrane. A helical membrane pass occupies residues 98-118 (ITQLCFFVIFAVSESYMLAAM). Residues 119–143 (AYDRYVAICSPLLYSSIMSQHKCLS) lie on the Cytoplasmic side of the membrane. Residues 144-164 (LVLGVYILGIVCASAHVGCIF) traverse the membrane as a helical segment. Residues 165 to 196 (RIDFCKSDLINHYFCDLISILNLSCSNIFVND) lie on the Extracellular side of the membrane. The helical transmembrane segment at 197–217 (LVILIFSLINTIFPTLTILSS) threads the bilayer. Residues 218–236 (YAFIIISILRIKSTEGRSK) are Cytoplasmic-facing. The helical transmembrane segment at 237-257 (AFSTCSSHISAVAIFYISAGF) threads the bilayer. At 258-271 (TYLNPSSSHSMDEG) the chain is on the extracellular side. The chain crosses the membrane as a helical span at residues 272 to 292 (KVSSIFYTIIVPMLNPLIYSL). Over 293-306 (RNKDVKIALKKMIE) the chain is Cytoplasmic.

Belongs to the G-protein coupled receptor 1 family.

The protein resides in the cell membrane. Its function is as follows. Odorant receptor. This is Olfactory receptor 8G17 from Mus musculus (Mouse).